A 146-amino-acid chain; its full sequence is Large ribosomal subunit protein uL15 (146 aa).

The span at 1–13 (MKLHELKAAEGSR) shows a compositional bias: basic and acidic residues. A disordered region spans residues 1–56 (MKLHELKAAEGSRRVRNRVGRGAGSGNGKTSGRGQKGQKARSGGGVRPGFEGGQLP). Composition is skewed to gly residues over residues 21 to 35 (RGAG…GRGQ) and 42 to 52 (SGGGVRPGFEG).

The protein belongs to the universal ribosomal protein uL15 family. As to quaternary structure, part of the 50S ribosomal subunit.

Binds to the 23S rRNA. The protein is Large ribosomal subunit protein uL15 of Staphylococcus haemolyticus (strain JCSC1435).